A 579-amino-acid polypeptide reads, in one-letter code: Moesin a (579 aa).

The FERM domain occupies 5 to 295 (ISVRVTTMDA…GNHELYMRRR (291 aa)). Residues 306-448 (KAQAKEEKNH…EDEALEWQTK (143 aa)) are a coiled coil. Disordered stretches follow at residues 308–341 (QAKE…EKIE), 376–418 (EQER…EHLA), and 464–519 (KNKV…KNER). The segment covering 376–400 (EQERKRAQEEAERLERERRLAEEAK) has biased composition (basic and acidic residues). Residues 490–501 (AEASAELTSAAA) show a composition bias toward low complexity. A compositionally biased stretch (basic and acidic residues) spans 502 to 519 (YKDRSEEERMTEAEKNER). Residues 517–551 (NERVQKHLLALTSELANARDETKKTQNDIIHAENV) adopt a coiled-coil conformation.

The protein localises to the cell membrane. The protein resides in the cell junction. Positively regulates endothelial adherens junction formation and stabilization. Is thereby required for intersegmental vessel luminal membrane formation and stabilization during tubulogenesis in the early stages of development, independent of blood flow dynamics. The protein is Moesin a of Danio rerio (Zebrafish).